We begin with the raw amino-acid sequence, 160 residues long: Ribosomal RNA large subunit methyltransferase H (160 aa).

S-adenosyl-L-methionine-binding positions include leucine 76, glycine 108, and 127-132; that span reads LGKMTW.

It belongs to the RNA methyltransferase RlmH family. Homodimer.

It localises to the cytoplasm. It carries out the reaction pseudouridine(1915) in 23S rRNA + S-adenosyl-L-methionine = N(3)-methylpseudouridine(1915) in 23S rRNA + S-adenosyl-L-homocysteine + H(+). In terms of biological role, specifically methylates the pseudouridine at position 1915 (m3Psi1915) in 23S rRNA. This chain is Ribosomal RNA large subunit methyltransferase H, found in Rhizobium etli (strain ATCC 51251 / DSM 11541 / JCM 21823 / NBRC 15573 / CFN 42).